Consider the following 481-residue polypeptide: Tryptophan--tRNA ligase, cytoplasmic (481 aa).

In terms of domain architecture, WHEP-TRS spans 12–68 (SPLELFNSIATQGELVRSLKAGNAPKDEIDSAVKMLLSLKMSYKAAMGEEYKAGCPP). Position 158 is an N6-succinyllysine (Lys-158). The 'HIGH' region motif lies at 168 to 177 (PSSEAMHLGH). The 'KMSKS' region motif lies at 353–357 (KMSAS). Position 355 is a phosphoserine (Ser-355).

Belongs to the class-I aminoacyl-tRNA synthetase family. As to quaternary structure, homodimer. Interacts with oxidized form of GAPDH. Post-translationally, proteolytic cleavage generates 2 forms; T1-TrpRS and T2-TrpRS. Isoform 2 is widely expressed, isoform 1 is found only in embryonic stem cells.

Its subcellular location is the cytoplasm. The enzyme catalyses tRNA(Trp) + L-tryptophan + ATP = L-tryptophyl-tRNA(Trp) + AMP + diphosphate + H(+). In terms of biological role, catalyzes the attachment of tryptophan to tRNA(Trp) in a two-step reaction: tryptophan is first activated by ATP to form Trp-AMP and then transferred to the acceptor end of the tRNA(Trp). Could also possess an angiostatic activity. This chain is Tryptophan--tRNA ligase, cytoplasmic, found in Mus musculus (Mouse).